The following is a 130-amino-acid chain: Ribonuclease VapC46 (130 aa).

Residues 4-118 (IYLDSSAIVK…CTYDDRMRDA (115 aa)) enclose the PINc domain. Positions 7 and 91 each coordinate Mg(2+).

Belongs to the PINc/VapC protein family. Requires Mg(2+) as cofactor.

Toxic component of a type II toxin-antitoxin (TA) system. An RNase. Upon expression in M.smegmatis inhibits colony formation. Its toxic effect is neutralized by coexpression with cognate antitoxin VapB46. The chain is Ribonuclease VapC46 from Mycobacterium tuberculosis (strain ATCC 25618 / H37Rv).